Reading from the N-terminus, the 148-residue chain is SsrA-binding protein (148 aa).

Positions 119–148 (AKGKKQHDKRQSMKEADWKREKQRLIKHTR) are disordered. Positions 127–142 (KRQSMKEADWKREKQR) are enriched in basic and acidic residues.

Belongs to the SmpB family.

Its subcellular location is the cytoplasm. Its function is as follows. Required for rescue of stalled ribosomes mediated by trans-translation. Binds to transfer-messenger RNA (tmRNA), required for stable association of tmRNA with ribosomes. tmRNA and SmpB together mimic tRNA shape, replacing the anticodon stem-loop with SmpB. tmRNA is encoded by the ssrA gene; the 2 termini fold to resemble tRNA(Ala) and it encodes a 'tag peptide', a short internal open reading frame. During trans-translation Ala-aminoacylated tmRNA acts like a tRNA, entering the A-site of stalled ribosomes, displacing the stalled mRNA. The ribosome then switches to translate the ORF on the tmRNA; the nascent peptide is terminated with the 'tag peptide' encoded by the tmRNA and targeted for degradation. The ribosome is freed to recommence translation, which seems to be the essential function of trans-translation. The protein is SsrA-binding protein of Neisseria gonorrhoeae (strain ATCC 700825 / FA 1090).